The sequence spans 191 residues: MKQLFLIIGAPGSGKTTDAELIAKNNSEKIAHFSTGDLLRAESAKKTERGLLIEKFTSQGELVPLEIVVETILSAIKSSDKGIILIDGYPRSVEQMQALDKELSAQNEVVLKSVIEVEVSENTAKERVLGRSRGADDNEMVFHNRMRVFLDPLGEIQNFYKNKKVYKAINGERSIEEIVHEMQEYILSFGN.

12–17 (GSGKTT) contributes to the ATP binding site. An NMP region spans residues 34–63 (STGDLLRAESAKKTERGLLIEKFTSQGELV). Residues T35, R40, 61 to 63 (ELV), 88 to 91 (GYPR), and Q95 each bind AMP. The interval 130–136 (GRSRGAD) is LID. ATP is bound at residue R131. 2 residues coordinate AMP: R133 and R145. R173 provides a ligand contact to ATP.

The protein belongs to the adenylate kinase family. Monomer.

The protein resides in the cytoplasm. It carries out the reaction AMP + ATP = 2 ADP. It participates in purine metabolism; AMP biosynthesis via salvage pathway; AMP from ADP: step 1/1. Functionally, catalyzes the reversible transfer of the terminal phosphate group between ATP and AMP. Plays an important role in cellular energy homeostasis and in adenine nucleotide metabolism. This chain is Adenylate kinase, found in Helicobacter pylori (strain Shi470).